Here is a 154-residue protein sequence, read N- to C-terminus: UPF0756 membrane protein BPUM_2558 (154 aa).

The next 4 helical transmembrane spans lie at 8-28, 54-74, 87-107, and 117-137; these read FLVL…ILAV, WGVT…DIGF, WIAL…IVLL, and LVFG…GPLI.

Belongs to the UPF0756 family.

Its subcellular location is the cell membrane. The chain is UPF0756 membrane protein BPUM_2558 from Bacillus pumilus (strain SAFR-032).